Consider the following 272-residue polypeptide: Undecaprenyl-diphosphatase (272 aa).

8 helical membrane-spanning segments follow: residues 4 to 24 (IHSL…EFLP), 45 to 65 (AETF…VMFW), 89 to 109 (LTLG…LVFH), 115 to 135 (LFNP…LIAA), 152 to 174 (TYRQ…FSRS), 189 to 209 (YAAS…ATAL), 225 to 245 (MFAV…KTFL), and 251 to 271 (ISFI…YVVF).

This sequence belongs to the UppP family.

It is found in the cell inner membrane. It carries out the reaction di-trans,octa-cis-undecaprenyl diphosphate + H2O = di-trans,octa-cis-undecaprenyl phosphate + phosphate + H(+). Catalyzes the dephosphorylation of undecaprenyl diphosphate (UPP). Confers resistance to bacitracin. This chain is Undecaprenyl-diphosphatase, found in Citrobacter koseri (strain ATCC BAA-895 / CDC 4225-83 / SGSC4696).